The chain runs to 463 residues: 23S rRNA (uracil(1939)-C(5))-methyltransferase RlmD (463 aa).

In terms of domain architecture, TRAM spans 6–76 (KSRKPQQPEY…KRLEEAEMVE (71 aa)). [4Fe-4S] cluster-binding residues include Cys-90, Cys-96, Cys-99, and Cys-178. S-adenosyl-L-methionine contacts are provided by Gln-288, Phe-317, Asn-322, Glu-341, Asp-368, and Asp-389. Cys-415 functions as the Nucleophile in the catalytic mechanism.

It belongs to the class I-like SAM-binding methyltransferase superfamily. RNA M5U methyltransferase family. RlmD subfamily.

It catalyses the reaction uridine(1939) in 23S rRNA + S-adenosyl-L-methionine = 5-methyluridine(1939) in 23S rRNA + S-adenosyl-L-homocysteine + H(+). Its function is as follows. Catalyzes the formation of 5-methyl-uridine at position 1939 (m5U1939) in 23S rRNA. This Acinetobacter baumannii (strain AYE) protein is 23S rRNA (uracil(1939)-C(5))-methyltransferase RlmD.